Consider the following 258-residue polypeptide: Imidazole glycerol phosphate synthase subunit HisF (258 aa).

Catalysis depends on residues Asp11 and Asp130.

The protein belongs to the HisA/HisF family. In terms of assembly, heterodimer of HisH and HisF.

Its subcellular location is the cytoplasm. The enzyme catalyses 5-[(5-phospho-1-deoxy-D-ribulos-1-ylimino)methylamino]-1-(5-phospho-beta-D-ribosyl)imidazole-4-carboxamide + L-glutamine = D-erythro-1-(imidazol-4-yl)glycerol 3-phosphate + 5-amino-1-(5-phospho-beta-D-ribosyl)imidazole-4-carboxamide + L-glutamate + H(+). Its pathway is amino-acid biosynthesis; L-histidine biosynthesis; L-histidine from 5-phospho-alpha-D-ribose 1-diphosphate: step 5/9. Functionally, IGPS catalyzes the conversion of PRFAR and glutamine to IGP, AICAR and glutamate. The HisF subunit catalyzes the cyclization activity that produces IGP and AICAR from PRFAR using the ammonia provided by the HisH subunit. In Methylobacterium sp. (strain 4-46), this protein is Imidazole glycerol phosphate synthase subunit HisF.